The sequence spans 217 residues: Large ribosomal subunit protein uL3 (217 aa).

Belongs to the universal ribosomal protein uL3 family. As to quaternary structure, part of the 50S ribosomal subunit. Forms a cluster with proteins L14 and L19.

Functionally, one of the primary rRNA binding proteins, it binds directly near the 3'-end of the 23S rRNA, where it nucleates assembly of the 50S subunit. In Mycolicibacterium smegmatis (strain ATCC 700084 / mc(2)155) (Mycobacterium smegmatis), this protein is Large ribosomal subunit protein uL3.